Consider the following 577-residue polypeptide: Sulfite reductase [NADPH] hemoprotein beta-component (577 aa).

[4Fe-4S] cluster contacts are provided by Cys440, Cys446, Cys486, and Cys490. Cys490 is a siroheme binding site.

The protein belongs to the nitrite and sulfite reductase 4Fe-4S domain family. In terms of assembly, alpha(8)-beta(8). The alpha component is a flavoprotein, the beta component is a hemoprotein. Requires siroheme as cofactor. [4Fe-4S] cluster serves as cofactor.

The enzyme catalyses hydrogen sulfide + 3 NADP(+) + 3 H2O = sulfite + 3 NADPH + 4 H(+). The protein operates within sulfur metabolism; hydrogen sulfide biosynthesis; hydrogen sulfide from sulfite (NADPH route): step 1/1. Component of the sulfite reductase complex that catalyzes the 6-electron reduction of sulfite to sulfide. This is one of several activities required for the biosynthesis of L-cysteine from sulfate. This Vibrio cholerae serotype O1 (strain ATCC 39541 / Classical Ogawa 395 / O395) protein is Sulfite reductase [NADPH] hemoprotein beta-component.